Consider the following 65-residue polypeptide: MPKMKTKKSASKRFTARPGGTIKRGQAFKRHILTKKTTKNKRQLRGTEGVHETNLKSVRAMMPYA.

Basic residues-rich tracts occupy residues 1–15 and 26–44; these read MPKM…KRFT and QAFK…KRQL. The interval 1-65 is disordered; it reads MPKMKTKKSA…KSVRAMMPYA (65 aa).

It belongs to the bacterial ribosomal protein bL35 family.

The chain is Large ribosomal subunit protein bL35 from Ralstonia nicotianae (strain ATCC BAA-1114 / GMI1000) (Ralstonia solanacearum).